We begin with the raw amino-acid sequence, 525 residues long: GMP synthase [glutamine-hydrolyzing] (525 aa).

A Glutamine amidotransferase type-1 domain is found at 9-207 (RILILDFGSQ…VRDICQCEAL (199 aa)). Cysteine 86 acts as the Nucleophile in catalysis. Active-site residues include histidine 181 and glutamate 183. The 193-residue stretch at 208-400 (WTPAKIIDDA…LGLPYDMLYR (193 aa)) folds into the GMPS ATP-PPase domain. 235 to 241 (SGGVDSS) serves as a coordination point for ATP.

In terms of assembly, homodimer.

It catalyses the reaction XMP + L-glutamine + ATP + H2O = GMP + L-glutamate + AMP + diphosphate + 2 H(+). Its pathway is purine metabolism; GMP biosynthesis; GMP from XMP (L-Gln route): step 1/1. In terms of biological role, catalyzes the synthesis of GMP from XMP. This is GMP synthase [glutamine-hydrolyzing] from Escherichia coli O127:H6 (strain E2348/69 / EPEC).